The primary structure comprises 157 residues: Phosphopantetheine adenylyltransferase (157 aa).

Substrate is bound at residue threonine 10. ATP is bound by residues 10–11 and histidine 18; that span reads TF. Lysine 42, leucine 74, and arginine 88 together coordinate substrate. ATP-binding positions include 89–91, glutamate 99, and 124–130; these read GLR and NAFISSS.

This sequence belongs to the bacterial CoaD family. In terms of assembly, homohexamer. Requires Mg(2+) as cofactor.

It localises to the cytoplasm. It carries out the reaction (R)-4'-phosphopantetheine + ATP + H(+) = 3'-dephospho-CoA + diphosphate. It participates in cofactor biosynthesis; coenzyme A biosynthesis; CoA from (R)-pantothenate: step 4/5. Functionally, reversibly transfers an adenylyl group from ATP to 4'-phosphopantetheine, yielding dephospho-CoA (dPCoA) and pyrophosphate. In Helicobacter pylori (strain J99 / ATCC 700824) (Campylobacter pylori J99), this protein is Phosphopantetheine adenylyltransferase.